The chain runs to 566 residues: Putative sensory transducer protein YvaQ (566 aa).

Residues 1–31 (MRLTISRKFSLVFLTLILINLLVGGIGVLNM) form the signal peptide. A coiled-coil region spans residues 74-110 (DKSKMDTLDQEMNQIMEDINQKLDNYEKTISTDKEQK). The helical transmembrane segment at 186 to 206 (IYTALLVAASILISIFIWLYI) threads the bilayer. Residues 208 to 261 (RNIVKPIIRMKESANHIAEGDLSNDMEALNSKDELGDLNEALQKMVGNLRDIVG) form the HAMP domain. The Methyl-accepting transducer domain occupies 280–530 (ATNETRSGSK…ESAAGIEETF (251 aa)). Residues 536 to 566 (SAHSMDQVLLNAEELEQLANELNEKMGQFTI) adopt a coiled-coil conformation.

This sequence belongs to the methyl-accepting chemotaxis (MCP) protein family.

The protein resides in the cell membrane. Its function is as follows. Chemotactic-signal transducers respond to changes in the concentration of attractants and repellents in the environment, transduce a signal from the outside to the inside of the cell, and facilitate sensory adaptation through the variation of the level of methylation. Attractants increase the level of methylation while repellents decrease the level of methylation. The chain is Putative sensory transducer protein YvaQ (yvaQ) from Bacillus subtilis (strain 168).